The following is a 384-amino-acid chain: Alkanesulfonate monooxygenase (384 aa).

It belongs to the SsuD family.

It catalyses the reaction an alkanesulfonate + FMNH2 + O2 = an aldehyde + FMN + sulfite + H2O + 2 H(+). In terms of biological role, catalyzes the desulfonation of aliphatic sulfonates. The polypeptide is Alkanesulfonate monooxygenase (Burkholderia thailandensis (strain ATCC 700388 / DSM 13276 / CCUG 48851 / CIP 106301 / E264)).